The chain runs to 331 residues: Glyceraldehyde-3-phosphate dehydrogenase (331 aa).

NAD(+)-binding positions include 11 to 12, aspartate 33, and arginine 78; that span reads RI. Residues 148–150, threonine 179, 208–209, and arginine 231 each bind D-glyceraldehyde 3-phosphate; these read SCT and TG. Residue cysteine 149 is the Nucleophile of the active site. An NAD(+)-binding site is contributed by asparagine 313.

It belongs to the glyceraldehyde-3-phosphate dehydrogenase family. As to quaternary structure, homotetramer.

The protein resides in the cytoplasm. The enzyme catalyses D-glyceraldehyde 3-phosphate + phosphate + NAD(+) = (2R)-3-phospho-glyceroyl phosphate + NADH + H(+). The protein operates within carbohydrate degradation; glycolysis; pyruvate from D-glyceraldehyde 3-phosphate: step 1/5. This chain is Glyceraldehyde-3-phosphate dehydrogenase (GPD), found in Eremothecium gossypii (strain ATCC 10895 / CBS 109.51 / FGSC 9923 / NRRL Y-1056) (Yeast).